The following is a 75-amino-acid chain: Antimicrobial peptide ctriporin (75 aa).

Residues 1 to 22 form the signal peptide; sequence MDSKYLFVFLIFNVIVIDLCQG. Lysine 41 is subject to Lysine amide. Positions 47–75 are excised as a propeptide; it reads ELGSQYDYLQDFRKRELDLDDLLSKFPDY.

The protein belongs to the non-disulfide-bridged peptide (NDBP) superfamily. Short antimicrobial peptide (group 4) family. In terms of tissue distribution, expressed by the venom gland.

The protein resides in the secreted. Its subcellular location is the target cell membrane. Antimicrobial peptide that acts by breaking the cell wall. Is active against Gram-positive bacteria, fungi and antibiotic-resistant pathogens: S.aureus (MIC=5 ug/ml), M.luteus (MIC=5 ug/ml), B.thuringiensis (MIC=10 ug/ml), B.subtilis (MIC=10 ug/ml), C.albicans (MIC=20 ug/ml), methicillin-resistant S.aureus (MIC=5-10 ug/ml), and penicillin-resistant S.epidermidis (MIC=10 ug/ml). Also shows potent activity against antibiotic-sensitive and -resistant Acinetobacter baumannii (MIC=10-20 uM). Shows cytolytic activity against human erythrocytes. In vivo, is efficient in curing staphylococcal skin infection in mice, when externally applied. In Chaerilus tricostatus (Scorpion), this protein is Antimicrobial peptide ctriporin.